The chain runs to 430 residues: MLYEKFEHNINNLIGGFGLSKIAIAVSGGSDSVALLYLANIWAKKNNIELFVLSVDHNLRDQSKQEIEYIQNTANDLGLKFYSLFFDHQNNFSNLQERARKGRYDLMTSLCQKLDILVLLTAHHEDDYIENFCLRLERKSGVFGLSSSSVNWHNNTQIIRPLFNIPKSELVNYLATNNIKWFEDQSNLSTKYRRNTIRQKLAKEEVYIKDDIITQQIKVNELIENKFKPELISAIAESVKISEYGFAFLDLIKFSGFSQEVRVQLINFLLIIISGQQRSARFYSVEPILKLIRQSLDFKNTLHGCVIKRMQNKLLIYREFGKKLPESKLLLDKQLVWDNRFRITKNHNIENCVATYLSLEDYKIIKEKLDLEVLKNLSCGNHNAILFTLPIVKILEKVVAIPHISYYDNDIKSFNVSFAPDFTSRFTHFY.

27–32 provides a ligand contact to ATP; sequence SGGSDS.

This sequence belongs to the tRNA(Ile)-lysidine synthase family.

The protein localises to the cytoplasm. The enzyme catalyses cytidine(34) in tRNA(Ile2) + L-lysine + ATP = lysidine(34) in tRNA(Ile2) + AMP + diphosphate + H(+). Its function is as follows. Ligates lysine onto the cytidine present at position 34 of the AUA codon-specific tRNA(Ile) that contains the anticodon CAU, in an ATP-dependent manner. Cytidine is converted to lysidine, thus changing the amino acid specificity of the tRNA from methionine to isoleucine. This Rickettsia bellii (strain RML369-C) protein is tRNA(Ile)-lysidine synthase.